The primary structure comprises 423 residues: Glutamyl-tRNA reductase (423 aa).

Substrate-binding positions include 49 to 52 (TCNR), Ser-106, 111 to 113 (EPQ), and Gln-117. Cys-50 (nucleophile) is an active-site residue. Residue 186–191 (GAGDTS) participates in NADP(+) binding.

The protein belongs to the glutamyl-tRNA reductase family. As to quaternary structure, homodimer.

It catalyses the reaction (S)-4-amino-5-oxopentanoate + tRNA(Glu) + NADP(+) = L-glutamyl-tRNA(Glu) + NADPH + H(+). It participates in porphyrin-containing compound metabolism; protoporphyrin-IX biosynthesis; 5-aminolevulinate from L-glutamyl-tRNA(Glu): step 1/2. Its function is as follows. Catalyzes the NADPH-dependent reduction of glutamyl-tRNA(Glu) to glutamate 1-semialdehyde (GSA). In Idiomarina loihiensis (strain ATCC BAA-735 / DSM 15497 / L2-TR), this protein is Glutamyl-tRNA reductase.